A 136-amino-acid chain; its full sequence is S-protein homolog 6 (136 aa).

Residues 1–17 (MFIIIFIVLISLIGCET) form the signal peptide. 2 N-linked (GlcNAc...) asparagine glycosylation sites follow: Asn-76 and Asn-108.

The protein belongs to the plant self-incompatibility (S1) protein family.

It localises to the secreted. The chain is S-protein homolog 6 from Arabidopsis thaliana (Mouse-ear cress).